A 228-amino-acid polypeptide reads, in one-letter code: MGEELSVGFRFYPTEVELLTYYLRIQLGGGNATIHSLIPILDVFSVEPTQLPNLAGERCRGDAEQWIFFVPRQEREARGGRPSRTTGSGYWKATGSPGPVFSPDNRVIGVKKTMVFYTGKAPTGRKTKWKMNEYKAVETASVSTIPKSGSSRAFDRRPTEAYAIERNLPSNGVETSSRATISTSPETSHSGGNQVDLPVNATTITQSISDMVDELSQPFWEWEQMNWS.

Residues 5–156 (LSVGFRFYPT…KSGSSRAFDR (152 aa)) form the NAC domain. Disordered stretches follow at residues 77 to 96 (ARGGRPSRTTGSGYWKATGS) and 166 to 197 (RNLPSNGVETSSRATISTSPETSHSGGNQVDL). Residues 80-89 (GRPSRTTGSG) are compositionally biased toward low complexity. Residues 168–193 (LPSNGVETSSRATISTSPETSHSGGN) are compositionally biased toward polar residues.

Its subcellular location is the nucleus. This chain is Putative NAC domain-containing protein 61 (NAC061), found in Arabidopsis thaliana (Mouse-ear cress).